A 359-amino-acid polypeptide reads, in one-letter code: Proton-gated ion channel (359 aa).

The signal sequence occupies residues 1 to 43 (MFPTGWRPKLSESIAASRMLWQPMAAVAVVQIGLLWFSPPVWG). The Periplasmic portion of the chain corresponds to 44-235 (QDMVSPPPPI…LDYQLRISRQ (192 aa)). The chain crosses the membrane as a helical span at residues 236-258 (YFSYIPNIILPMLFILFISWTAF). Residues 259–261 (WST) are Cytoplasmic-facing. The chain crosses the membrane as a helical span at residues 262–286 (SYEANVTLVVSTLIAHIAFNILVET). Over 287–294 (NLPKTPYM) the chain is Periplasmic. Residues 295-323 (TYTGAIIFMIYLFYFVAVIEVTVQHYLKV) traverse the membrane as a helical segment. Residues 324–326 (ESQ) are Cytoplasmic-facing. The chain crosses the membrane as a helical span at residues 327 to 359 (PARAASITRASRIAFPVVFLLANIILAFLFFGF).

This sequence belongs to the ligand-gated ion channel (TC 1.A.9) family. Homopentamer.

The protein resides in the cell inner membrane. Its activity is regulated as follows. Tetraethylammonium (TEA) and tetrabutylammonium (TBA) inhibit the proton-activated currents in a dose- and voltage-dependent manner in vitro, whereas the blocker of acid sensing ion channels, amiloride, has no effect. Channel current of GLIC can be inhibited by inhaled and intravenous general anesthetics at and below concentrations used clinically. Ion conduction is also inhibited by lidocaine and by divalent transition metal ions such as cadmium ions. Functionally, cationic channel with similar permeabilities for Na(+) and K(+), that is activated by an increase of the proton concentration on the extracellular side. Displays no permeability for chloride ions. Shows slow kinetics of activation, no desensitization and a single channel conductance of 8 pS. Might contribute to adaptation to external pH change. This is Proton-gated ion channel (glvI) from Gloeobacter violaceus (strain ATCC 29082 / PCC 7421).